Here is a 375-residue protein sequence, read N- to C-terminus: Alcohol dehydrogenase 1 (375 aa).

The residue at position 1 (Ala1) is an N-acetylalanine. Residues Cys46, His68, Cys98, Cys101, Cys104, Cys112, and Cys175 each contribute to the Zn(2+) site. Residues Gly200–Gly205, Asp224, Lys229, Val293–Leu295, and Arg370 contribute to the NAD(+) site.

This sequence belongs to the zinc-containing alcohol dehydrogenase family. Class-I subfamily. Requires Zn(2+) as cofactor.

The protein resides in the cytoplasm. The catalysed reaction is a primary alcohol + NAD(+) = an aldehyde + NADH + H(+). It catalyses the reaction a secondary alcohol + NAD(+) = a ketone + NADH + H(+). The sequence is that of Alcohol dehydrogenase 1 from Pelophylax perezi (Perez's frog).